The sequence spans 285 residues: Non-homologous end joining protein Ku (285 aa).

The Ku domain maps to 9-176; it reads ISFGLVNVPV…PAEIRHLEAS (168 aa). The tract at residues 250-285 is disordered; it reads AMTDQKKQQNTAESETEEKPTKSTLTPRGRRKVKGA.

The protein belongs to the prokaryotic Ku family. As to quaternary structure, homodimer. Interacts with LigD.

In terms of biological role, with LigD forms a non-homologous end joining (NHEJ) DNA repair enzyme, which repairs dsDNA breaks with reduced fidelity. Binds linear dsDNA with 5'- and 3'- overhangs but not closed circular dsDNA nor ssDNA. Recruits and stimulates the ligase activity of LigD. This chain is Non-homologous end joining protein Ku, found in Desulfitobacterium hafniense (strain DSM 10664 / DCB-2).